Reading from the N-terminus, the 108-residue chain is Large ribosomal subunit protein uL24 (108 aa).

Belongs to the universal ribosomal protein uL24 family. Part of the 50S ribosomal subunit.

Its function is as follows. One of two assembly initiator proteins, it binds directly to the 5'-end of the 23S rRNA, where it nucleates assembly of the 50S subunit. In terms of biological role, one of the proteins that surrounds the polypeptide exit tunnel on the outside of the subunit. This is Large ribosomal subunit protein uL24 from Salinispora tropica (strain ATCC BAA-916 / DSM 44818 / JCM 13857 / NBRC 105044 / CNB-440).